Here is a 246-residue protein sequence, read N- to C-terminus: UDP-N-acetyl-D-mannosaminuronic acid transferase (246 aa).

The protein belongs to the glycosyltransferase 26 family.

It catalyses the reaction UDP-N-acetyl-alpha-D-mannosaminouronate + N-acetyl-alpha-D-glucosaminyl-di-trans,octa-cis-undecaprenyl diphosphate = beta-D-ManNAcA-(1-&gt;4)-alpha-D-GlcNAc-di-trans,octa-cis-undecaprenyl diphosphate + UDP + H(+). It functions in the pathway bacterial outer membrane biogenesis; enterobacterial common antigen biosynthesis. Catalyzes the synthesis of Und-PP-GlcNAc-ManNAcA (Lipid II), the second lipid-linked intermediate involved in enterobacterial common antigen (ECA) synthesis. The sequence is that of UDP-N-acetyl-D-mannosaminuronic acid transferase from Escherichia coli O157:H7.